The following is a 301-amino-acid chain: Formamidopyrimidine-DNA glycosylase (301 aa).

Proline 2 serves as the catalytic Schiff-base intermediate with DNA. Glutamate 3 functions as the Proton donor in the catalytic mechanism. Catalysis depends on lysine 58, which acts as the Proton donor; for beta-elimination activity. Residues histidine 109, arginine 131, and lysine 174 each contribute to the DNA site. The FPG-type zinc finger occupies 265–301 (SVYDREGEACRTPGCHGTVARIVQAGRSTFYCPHCQK). Arginine 291 functions as the Proton donor; for delta-elimination activity in the catalytic mechanism.

Belongs to the FPG family. In terms of assembly, monomer. Zn(2+) serves as cofactor.

It carries out the reaction Hydrolysis of DNA containing ring-opened 7-methylguanine residues, releasing 2,6-diamino-4-hydroxy-5-(N-methyl)formamidopyrimidine.. It catalyses the reaction 2'-deoxyribonucleotide-(2'-deoxyribose 5'-phosphate)-2'-deoxyribonucleotide-DNA = a 3'-end 2'-deoxyribonucleotide-(2,3-dehydro-2,3-deoxyribose 5'-phosphate)-DNA + a 5'-end 5'-phospho-2'-deoxyribonucleoside-DNA + H(+). Its function is as follows. Involved in base excision repair of DNA damaged by oxidation or by mutagenic agents. Acts as a DNA glycosylase that recognizes and removes damaged bases. Has a preference for oxidized purines, such as 7,8-dihydro-8-oxoguanine (8-oxoG). Has AP (apurinic/apyrimidinic) lyase activity and introduces nicks in the DNA strand. Cleaves the DNA backbone by beta-delta elimination to generate a single-strand break at the site of the removed base with both 3'- and 5'-phosphates. This Rhizobium meliloti (strain 1021) (Ensifer meliloti) protein is Formamidopyrimidine-DNA glycosylase (mutM).